The following is a 1719-amino-acid chain: Sodium channel protein type 4 subunit alpha B (1719 aa).

At 1 to 126 (MRTLLPPVGS…IVAIKILIHS (126 aa)) the chain is on the cytoplasmic side. The disordered stretch occupies residues 28–50 (QQIREEERKRTNAQVSEELPEPA). Residues 108–431 (LLSPFNALRI…VVAMAYAEQN (324 aa)) form an I repeat. Residues 127 to 145 (LFSLFIMATILTNCAFMTL) form a helical membrane-spanning segment. Topologically, residues 146–152 (SDPPAWS) are extracellular. The chain crosses the membrane as a helical span at residues 153 to 173 (KTMEYVFTFIYTFEATIKILS). The Cytoplasmic segment spans residues 174–187 (RGFCVGKFTFLKDP). A helical membrane pass occupies residues 188–205 (WNWLDFMVISMAYLTELV). Residues 206-211 (DLGNVS) lie on the Extracellular side of the membrane. Residue N209 is glycosylated (N-linked (GlcNAc...) asparagine). A helical transmembrane segment spans residues 212-228 (VLRTFRVLRALKTITVI). Residues 229 to 247 (PGLKTIVGALIQSVRKLAD) lie on the Cytoplasmic side of the membrane. Residues 248-267 (AMVLTVFCLSVFALIGLQLF) traverse the membrane as a helical segment. Over 268 to 368 (MGNLRQKCVL…PNYGYTSYDS (101 aa)) the chain is Extracellular. A disulfide bridge connects residues C275 and C337. N285 and N339 each carry an N-linked (GlcNAc...) asparagine glycan. C346 and C352 are disulfide-bonded. Residues 369 to 393 (FGWAFLALFRLMTQDFWENLFQLTL) constitute an intramembrane region (pore-forming). Residues 394 to 400 (RTAGKTY) lie on the Extracellular side of the membrane. The chain crosses the membrane as a helical span at residues 401 to 421 (MIFFVVVIFLGSFYLINLILA). Residues 422 to 513 (VVAMAYAEQN…ECLYAIVMDP (92 aa)) lie on the Cytoplasmic side of the membrane. Residues 495-766 (CCGCWRHLKE…QIAINRINRA (272 aa)) form an II repeat. A helical transmembrane segment spans residues 514–532 (FVDLGITICIILNTVFMAM). Residues 533 to 543 (EHYPMSADFEE) are Extracellular-facing. Residues 544-563 (LLSVGNLVFTGIFTGEMVFK) form a helical membrane-spanning segment. Residues 564–577 (ILAMDPYFYFQVGW) are Cytoplasmic-facing. A helical membrane pass occupies residues 578 to 597 (NIFDSIIVTISLVELGLANV). Residues 598-599 (QG) lie on the Extracellular side of the membrane. A helical membrane pass occupies residues 600–617 (LSVLRSFRLMRVFKLAKS). Topologically, residues 618–633 (WPTLNMLIKIIGNSVG) are cytoplasmic. Residues 634–652 (ALGNLTLVLAIIVFIFAVV) traverse the membrane as a helical segment. The Extracellular portion of the chain corresponds to 653–681 (GMQLFGKNYKDCVCRISEDCVLPRWHMND). C666 and C672 are oxidised to a cystine. An intramembrane region (pore-forming) is located at residues 682–702 (FFHAFLIIFRVLCGEWIESMW). Topologically, residues 703–713 (DCMEVSGQTMC) are extracellular. C704 and C713 form a disulfide bridge. A helical transmembrane segment spans residues 714–732 (LIVFMMVLVIGNLVVLNLF). The Cytoplasmic portion of the chain corresponds to 733 to 919 (LALLLSSFSG…TCFSIVENNY (187 aa)). Residues 834–845 (SDSDDSDYDEDK) show a composition bias toward acidic residues. The tract at residues 834–862 (SDSDDSDYDEDKDSQCDESSVCSSVQKPE) is disordered. Residues 900 to 1215 (RGKIWCNIRR…KKYYNAMKKL (316 aa)) form an III repeat. The chain crosses the membrane as a helical span at residues 920 to 937 (FESFIVFMILLSSGALAF). Residues 938 to 950 (EDIYLEKHQLIKS) are Extracellular-facing. The chain crosses the membrane as a helical span at residues 951 to 969 (ILEYADKVFTYVFVMEMVL). At 970–983 (KWFAYGFKSYFSNA) the chain is on the cytoplasmic side. Residues 984–1002 (WCWLDFLIVDVSLVSLTAN) traverse the membrane as a helical segment. Residues 1003–1010 (ILGYSELG) are Extracellular-facing. A helical membrane pass occupies residues 1011–1029 (AIKSLRTLRALRPLRALSR). Residues 1030-1046 (FEGMRVVVNALVGAVPS) lie on the Cytoplasmic side of the membrane. The helical transmembrane segment at 1047 to 1066 (IFNVLLVCLIFWLIFSIMGV) threads the bilayer. Residues 1067–1119 (NLFAGKFSYCFNETSQEIIDTKVVDNKTECIALIKANFTEVRWKNVKVNYDNV) are Extracellular-facing. A disulfide bridge connects residues C1076 and C1096. 2 N-linked (GlcNAc...) asparagine glycosylation sites follow: N1078 and N1092. An intramembrane region (pore-forming) is located at residues 1120–1141 (GIGYLSLLQVATFKGWTDIMYA). The Extracellular segment spans residues 1142–1158 (AVDSRDVESQPIYEVNL). The chain crosses the membrane as a helical span at residues 1159 to 1180 (YMYLYFVIFIIFGSFFTLNLFI). Residues 1181–1243 (GVIIDNFNQQ…LVFDLVTKQI (63 aa)) are Cytoplasmic-facing. The interval 1199–1201 (IFM) is important for rapid channel inactivation. The IV repeat unit spans residues 1224-1521 (VPRPENPFQG…WEKFDPDASQ (298 aa)). Residues 1244–1261 (FDVFIMVLICLNMVTMMV) form a helical membrane-spanning segment. Residues 1262–1272 (ETDEQSDKKEE) are Extracellular-facing. The chain crosses the membrane as a helical span at residues 1273–1291 (VLYWINVVFILIFTTECTL). Over 1292–1303 (KIIALRRHYFSI) the chain is Cytoplasmic. Residues 1304-1321 (GWNIFDFVVVILSILGLL) form a helical membrane-spanning segment. Residues 1322 to 1334 (LADIIEKYFVSPT) lie on the Extracellular side of the membrane. Residues 1335–1351 (LFRVIRLARIGRVLRLI) traverse the membrane as a helical segment. Residues 1352-1370 (RGAKGIRTLLFALMMSLPA) lie on the Cytoplasmic side of the membrane. Residues 1371–1388 (LFNIGLLLFLIMFIFSIF) traverse the membrane as a helical segment. Topologically, residues 1389–1410 (GMSNFAYVKKEALIDDMFNFET) are extracellular. The segment at residues 1411–1433 (FGNSMICLFMITTSAGWDGLLSP) is an intramembrane region (pore-forming). Topologically, residues 1434-1462 (IMNTPPDCDPNVENPGTTVRGNCGSPAIG) are extracellular. C1441 and C1456 are disulfide-bonded. A helical transmembrane segment spans residues 1463–1485 (IAFFSTYIIMSFLVVVNMFIAII). Topologically, residues 1486 to 1719 (LENFNVATEE…QERDQRETSV (234 aa)) are cytoplasmic. An IQ domain is found at 1615–1644 (EEVAATVIQRAYRKYLLLRTVRLASFMYRE).

Belongs to the sodium channel (TC 1.A.1.10) family. Nav1.4/SCN4A subfamily. As to quaternary structure, voltage-gated sodium (Nav) channels consist of an ion-conducting alpha subunit which is functional on its own associated with regulatory beta subunits.

Its subcellular location is the cell membrane. The enzyme catalyses Na(+)(in) = Na(+)(out). In terms of biological role, pore-forming subunit of a voltage-gated sodium (Nav) channel that directly mediates the depolarizing phase of action potentials in excitable membranes. Navs, also called VGSCs (voltage-gated sodium channels) or VDSCs (voltage-dependent sodium channels), operate by switching between closed and open conformations depending on the voltage difference across the membrane. In the open conformation they allow Na(+) ions to selectively pass through the pore, along their electrochemical gradient. The influx of Na+ ions provokes membrane depolarization, initiating the propagation of electrical signals throughout cells and tissues. In Takifugu rubripes (Japanese pufferfish), this protein is Sodium channel protein type 4 subunit alpha B (scn4ab).